The chain runs to 140 residues: Putative pre-16S rRNA nuclease (140 aa).

Belongs to the YqgF nuclease family.

The protein resides in the cytoplasm. Its function is as follows. Could be a nuclease involved in processing of the 5'-end of pre-16S rRNA. The chain is Putative pre-16S rRNA nuclease from Parabacteroides distasonis (strain ATCC 8503 / DSM 20701 / CIP 104284 / JCM 5825 / NCTC 11152).